The primary structure comprises 129 residues: Fluoride-specific ion channel FluC 2 (129 aa).

The helical transmembrane segment at 19-39 (GLGLVVPAAAVGGFPLGTLFI) threads the bilayer. Na(+) is bound by residues G74 and T77. A helical membrane pass occupies residues 95-115 (FGMAAVYIAASLFGGLLASWA).

This sequence belongs to the fluoride channel Fluc/FEX (TC 1.A.43) family.

It is found in the cell membrane. The enzyme catalyses fluoride(in) = fluoride(out). With respect to regulation, na(+) is not transported, but it plays an essential structural role and its presence is essential for fluoride channel function. In terms of biological role, fluoride-specific ion channel. Important for reducing fluoride concentration in the cell, thus reducing its toxicity. This Geobacillus kaustophilus (strain HTA426) protein is Fluoride-specific ion channel FluC 2.